Consider the following 217-residue polypeptide: MSESHLYTYGIIDDNESLALNVDGVAGATRAYTVSYRSLSAVVSDIETTDPERTDAAVEAHNTVLQAVLEHDATRAVVPMSFGMAFKNARTLKGVLRGARRALRSTLTEIAGTVELGVKVLAPGDDTAVDTAAVRSDVTARLSALSVGETENDCFTDRLIINKSYLVEHDTRDAFDAAIDEIDAAHDDLTVRYTGPWPPYNFVDIHIGAEQAQQGGR.

The protein belongs to the gas vesicle GvpF/GvpL family. As to quaternary structure, binds GvpA.

The protein resides in the gas vesicle. It is found in the cytoplasm. Its function is as follows. A minor component of the gas vesicle, may be involved in preventing GvpA aggregation during gas vesicle nucleation. Gas vesicles are hollow, gas filled proteinaceous nanostructures found in several microbial planktonic microorganisms. They allow positioning of halobacteria at the optimal depth for growth in the poorly aerated, shallow brine pools of their habitat. Expression of 2 c-vac DNA fragments containing 2 divergently transcribed regions (gvpE-gvpF-gvpG-gvpH-gvpI-gvpJ-gvpK-gvpL-gvpM and gvpA-gvpC-gvpN-gvpO) allows H.volcanii to produce gas vesicles. Note that gvpD is not necessary for gas vesicle formation. The sequence is that of Gas vesicle protein F2 from Halobacterium salinarum (strain ATCC 700922 / JCM 11081 / NRC-1) (Halobacterium halobium).